Reading from the N-terminus, the 149-residue chain is Transcriptional regulator MraZ (149 aa).

2 SpoVT-AbrB domains span residues 6 to 52 and 81 to 124; these read RSHR…PYPD and AEEM…DQSK.

It belongs to the MraZ family. In terms of assembly, forms oligomers.

It localises to the cytoplasm. The protein resides in the nucleoid. The sequence is that of Transcriptional regulator MraZ from Nitratidesulfovibrio vulgaris (strain ATCC 29579 / DSM 644 / CCUG 34227 / NCIMB 8303 / VKM B-1760 / Hildenborough) (Desulfovibrio vulgaris).